Reading from the N-terminus, the 426-residue chain is Glutamyl-tRNA reductase (426 aa).

Substrate is bound by residues 49–52 (TCNR), serine 101, 106–108 (EPQ), and glutamine 112. Residue cysteine 50 is the Nucleophile of the active site. Residue 181–186 (GAGETI) coordinates NADP(+). Positions 405–426 (RLFPEKPGYQHPPHSYPDREDR) are disordered.

This sequence belongs to the glutamyl-tRNA reductase family. In terms of assembly, homodimer.

It carries out the reaction (S)-4-amino-5-oxopentanoate + tRNA(Glu) + NADP(+) = L-glutamyl-tRNA(Glu) + NADPH + H(+). Its pathway is porphyrin-containing compound metabolism; protoporphyrin-IX biosynthesis; 5-aminolevulinate from L-glutamyl-tRNA(Glu): step 1/2. Catalyzes the NADPH-dependent reduction of glutamyl-tRNA(Glu) to glutamate 1-semialdehyde (GSA). This chain is Glutamyl-tRNA reductase, found in Xanthomonas axonopodis pv. citri (strain 306).